A 365-amino-acid polypeptide reads, in one-letter code: Chorismate synthase (365 aa).

Positions 48 and 54 each coordinate NADP(+). Residues Arg125 to Ser127, Asn238 to Ala239, Gly278, Lys293 to Ser297, and Arg319 each bind FMN.

The protein belongs to the chorismate synthase family. Homotetramer. FMNH2 serves as cofactor.

The catalysed reaction is 5-O-(1-carboxyvinyl)-3-phosphoshikimate = chorismate + phosphate. Its pathway is metabolic intermediate biosynthesis; chorismate biosynthesis; chorismate from D-erythrose 4-phosphate and phosphoenolpyruvate: step 7/7. In terms of biological role, catalyzes the anti-1,4-elimination of the C-3 phosphate and the C-6 proR hydrogen from 5-enolpyruvylshikimate-3-phosphate (EPSP) to yield chorismate, which is the branch point compound that serves as the starting substrate for the three terminal pathways of aromatic amino acid biosynthesis. This reaction introduces a second double bond into the aromatic ring system. This is Chorismate synthase from Alteromonas mediterranea (strain DSM 17117 / CIP 110805 / LMG 28347 / Deep ecotype).